The primary structure comprises 432 residues: Adenylosuccinate synthetase (432 aa).

GTP contacts are provided by residues 13-19 (GDEGKGK) and 41-43 (GHT). Asp14 serves as the catalytic Proton acceptor. The Mg(2+) site is built by Asp14 and Gly41. IMP-binding positions include 14 to 17 (DEGK), 39 to 42 (NAGH), Thr130, Arg144, Gln225, Thr240, and Arg304. Residue His42 is the Proton donor of the active site. 300-306 (ATTGRRR) lines the substrate pocket. GTP is bound by residues Arg306, 332-334 (KLD), and 415-417 (STG).

The protein belongs to the adenylosuccinate synthetase family. As to quaternary structure, homodimer. Mg(2+) serves as cofactor.

The protein localises to the cytoplasm. It catalyses the reaction IMP + L-aspartate + GTP = N(6)-(1,2-dicarboxyethyl)-AMP + GDP + phosphate + 2 H(+). It functions in the pathway purine metabolism; AMP biosynthesis via de novo pathway; AMP from IMP: step 1/2. Its function is as follows. Plays an important role in the de novo pathway of purine nucleotide biosynthesis. Catalyzes the first committed step in the biosynthesis of AMP from IMP. The protein is Adenylosuccinate synthetase of Pectobacterium atrosepticum (strain SCRI 1043 / ATCC BAA-672) (Erwinia carotovora subsp. atroseptica).